Consider the following 346-residue polypeptide: uncharacterized protein (346 aa).

This is an uncharacterized protein from Acanthamoeba polyphaga (Amoeba).